A 106-amino-acid chain; its full sequence is BLOC-1-related complex subunit 7 (106 aa).

The protein belongs to the BORCS7 family. In terms of assembly, component of the BLOC-one-related complex (BORC) which is composed of BLOC1S1, BLOC1S2, BORCS5, BORCS6, BORCS7, BORCS8, KXD1 and SNAPIN.

It is found in the lysosome membrane. Functionally, as part of the BORC complex may play a role in lysosomes movement and localization at the cell periphery. Associated with the cytosolic face of lysosomes, the BORC complex may recruit ARL8B and couple lysosomes to microtubule plus-end-directed kinesin motor. This Homo sapiens (Human) protein is BLOC-1-related complex subunit 7.